Reading from the N-terminus, the 119-residue chain is Protein phosphatase EYA4 (119 aa).

It belongs to the HAD-like hydrolase superfamily. EYA family. Mg(2+) is required as a cofactor.

Its subcellular location is the cytoplasm. It localises to the nucleus. The catalysed reaction is O-phospho-L-tyrosyl-[protein] + H2O = L-tyrosyl-[protein] + phosphate. In terms of biological role, tyrosine phosphatase that specifically dephosphorylates 'Tyr-142' of histone H2AX (H2AXY142ph). 'Tyr-142' phosphorylation of histone H2AX plays a central role in DNA repair and acts as a mark that distinguishes between apoptotic and repair responses to genotoxic stress. Promotes efficient DNA repair by dephosphorylating H2AX, promoting the recruitment of DNA repair complexes containing MDC1. Its function as histone phosphatase probably explains its role in transcription regulation during organogenesis. May be involved in development of the eye. The protein is Protein phosphatase EYA4 (eya4) of Takifugu rubripes (Japanese pufferfish).